A 201-amino-acid polypeptide reads, in one-letter code: Anthranilate synthase component 2 (201 aa).

Residues 3 to 196 form the Glutamine amidotransferase type-1 domain; the sequence is NILFIDNFDS…IDWALSSTPA (194 aa). 57-59 provides a ligand contact to L-glutamine; it reads GPG. The active-site Nucleophile; for GATase activity is cysteine 84. L-glutamine-binding positions include glutamine 88 and 134-135; that span reads SL. Catalysis depends on for GATase activity residues histidine 170 and glutamate 172.

As to quaternary structure, heterotetramer consisting of two non-identical subunits: a beta subunit (TrpG) and a large alpha subunit (TrpE).

The enzyme catalyses chorismate + L-glutamine = anthranilate + pyruvate + L-glutamate + H(+). The protein operates within amino-acid biosynthesis; L-tryptophan biosynthesis; L-tryptophan from chorismate: step 1/5. Functionally, part of a heterotetrameric complex that catalyzes the two-step biosynthesis of anthranilate, an intermediate in the biosynthesis of L-tryptophan. In the first step, the glutamine-binding beta subunit (TrpG) of anthranilate synthase (AS) provides the glutamine amidotransferase activity which generates ammonia as a substrate that, along with chorismate, is used in the second step, catalyzed by the large alpha subunit of AS (TrpE) to produce anthranilate. In the absence of TrpG, TrpE can synthesize anthranilate directly from chorismate and high concentrations of ammonia. This Vibrio cholerae serotype O1 (strain ATCC 39315 / El Tor Inaba N16961) protein is Anthranilate synthase component 2 (trpG).